The sequence spans 416 residues: Vacuole membrane protein KMS2 (416 aa).

Gly2 carries the N-acetylglycine modification. Over 2–59 the chain is Cytoplasmic; that stretch reads GYGNRASSKTPAISGLREKHQQDLEKLTLTSQPFKTLRLFVVAVFLYVRRWSSYLLAN. Residues 60-80 traverse the membrane as a helical segment; sequence VGWLILFCSIFVAFAALLVTL. The Lumenal segment spans residues 81–100; the sequence is DGPHVKHVEELSEYTRFGLW. A helical transmembrane segment spans residues 101–123; it reads WIFLGVASSIGLGSGLHTFVLYL. Topologically, residues 124–249 are cytoplasmic; that stretch reads GPHIALFTIK…WLLSHSQYLN (126 aa). The chain crosses the membrane as a helical span at residues 250-270; sequence FFTILILASVPNPLFDLAGIM. The Lumenal segment spans residues 271–281; it reads CGQFEKPFWEF. The helical transmembrane segment at 282–304 threads the bilayer; the sequence is FLATLIGKAIIKTHIQTVFIICV. Over 305 to 315 the chain is Cytoplasmic; it reads CNNQLLDWVEN. A helical membrane pass occupies residues 316 to 336; the sequence is ELIYILSFVPGFASALPELTA. The Lumenal segment spans residues 337 to 364; that stretch reads KLRLMKEKYLIASPPVSSDINVKKWDLS. The chain crosses the membrane as a helical span at residues 365–385; the sequence is FASVWNGVVWLMLLNFFGQIV. Residues 386–416 lie on the Cytoplasmic side of the membrane; it reads TSTAQRYLKKQQEEELDALTNKSSLTSKKSK.

The protein belongs to the VMP1 family.

Its subcellular location is the endoplasmic reticulum membrane. Involved in the early secretory pathway. Required for the correct export of secretory products from the endoplasmic reticulum (ER) and involved in the maintenance of ER integrity. This is Vacuole membrane protein KMS2 from Arabidopsis thaliana (Mouse-ear cress).